Consider the following 555-residue polypeptide: Arginine--tRNA ligase (555 aa).

A 'HIGH' region motif is present at residues 117–127 (ANPNGPLHVGH).

This sequence belongs to the class-I aminoacyl-tRNA synthetase family.

The protein localises to the cytoplasm. The enzyme catalyses tRNA(Arg) + L-arginine + ATP = L-arginyl-tRNA(Arg) + AMP + diphosphate. This Methanospirillum hungatei JF-1 (strain ATCC 27890 / DSM 864 / NBRC 100397 / JF-1) protein is Arginine--tRNA ligase.